Reading from the N-terminus, the 99-residue chain is Malonate decarboxylase acyl carrier protein (99 aa).

Residue Ser-25 is modified to O-(phosphoribosyl dephospho-coenzyme A)serine.

This sequence belongs to the MdcC family. Covalently binds the prosthetic group of malonate decarboxylase.

The protein localises to the cytoplasm. Subunit of malonate decarboxylase, it is an acyl carrier protein to which acetyl and malonyl thioester residues are bound via a 2'-(5''-phosphoribosyl)-3'-dephospho-CoA prosthetic group and turn over during the catalytic mechanism. This is Malonate decarboxylase acyl carrier protein from Pseudomonas aeruginosa (strain LESB58).